A 219-amino-acid chain; its full sequence is Histone H1.4 (219 aa).

Residues 1 to 15 (MSETAPAAPAAPAPA) show a composition bias toward low complexity. Residues 1-41 (MSETAPAAPAAPAPAEKTPVKKKARKSAGAAKRKASGPPVS) form a disordered region. Ser-2 is modified (N-acetylserine). The residue at position 2 (Ser-2) is a Phosphoserine. Lys-17 carries the N6-acetyllysine modification. The residue at position 18 (Thr-18) is a Phosphothreonine. The segment covering 20–35 (VKKKARKSAGAAKRKA) has biased composition (basic residues). Lys-26 is subject to N6-acetyllysine; alternate. Lys-26 bears the N6-methyllysine; alternate mark. Lys-34 carries the N6-(beta-hydroxybutyryl)lysine; alternate modification. Residue Lys-34 is modified to N6-succinyllysine; alternate. Phosphoserine is present on Ser-36. The H15 domain maps to 36–109 (SGPPVSELIT…GASGSFKLNK (74 aa)). N6-(beta-hydroxybutyryl)lysine is present on Lys-52. Arg-54 is subject to Citrulline. N6-(beta-hydroxybutyryl)lysine occurs at positions 64, 85, 90, and 106. Residues 91–219 (GTLVQTKGTG…KPKKAPAKKK (129 aa)) form a disordered region. The segment covering 119-140 (KPKKAGAAKPKKPAGAAKKPKK) has biased composition (basic residues). Thr-146 is modified (phosphothreonine). Basic residues-rich tracts occupy residues 149-160 (KGAKKTPKKAKK) and 168-185 (KKAKSPKKAKAAKPKKAP). Ser-187 carries the phosphoserine modification. Residues 192–219 (KAVKPKAAKPKAAKPKTAKPKKAPAKKK) show a composition bias toward basic residues.

This sequence belongs to the histone H1/H5 family. H1 histones are progressively phosphorylated during the cell cycle, becoming maximally phosphorylated during late G2 phase and M phase, and being dephosphorylated sharply thereafter. Post-translationally, acetylated at Lys-26. Deacetylated at Lys-26 by SIRT1. In terms of processing, citrullination at Arg-54 (H1R54ci) by PADI4 takes place within the DNA-binding site of H1 and results in its displacement from chromatin and global chromatin decondensation, thereby promoting pluripotency and stem cell maintenance.

It localises to the nucleus. The protein localises to the chromosome. Its function is as follows. Histone H1 protein binds to linker DNA between nucleosomes forming the macromolecular structure known as the chromatin fiber. Histones H1 are necessary for the condensation of nucleosome chains into higher-order structured fibers. Also acts as a regulator of individual gene transcription through chromatin remodeling, nucleosome spacing and DNA methylation. The sequence is that of Histone H1.4 from Oryctolagus cuniculus (Rabbit).